We begin with the raw amino-acid sequence, 425 residues long: Histone-binding protein RBBP7 (425 aa).

Position 2 is an N-acetylalanine (Ala-2). Ser-3 carries the post-translational modification Phosphoserine. Lys-4 carries the N6-acetyllysine; alternate modification. Lys-4 participates in a covalent cross-link: Glycyl lysine isopeptide (Lys-Gly) (interchain with G-Cter in SUMO2); alternate. A Glycyl lysine isopeptide (Lys-Gly) (interchain with G-Cter in ubiquitin); alternate cross-link involves residue Lys-4. Residue Thr-10 is modified to Phosphothreonine. WD repeat units lie at residues 47-122 (QWLP…KINH), 128-173 (RARY…LRLR), 181-217 (GLSWNSNLSGHLLSASDDHTVCLWDINAGPKEGKIVD), 228-269 (VVED…HLVD), 275-312 (VNCLSFNPYSEFILATGSADKTVALWDLRNLKLKLHTF), 318-369 (EIFQ…LFIH), and 376-403 (ISDFSWNPNEPWVICSVSEDNIMQIWQM). A Phosphoserine modification is found at Ser-95. A Glycyl lysine isopeptide (Lys-Gly) (interchain with G-Cter in SUMO2) cross-link involves residue Lys-101. Lys-119 is modified (N6-acetyllysine). A Glycyl lysine isopeptide (Lys-Gly) (interchain with G-Cter in SUMO2) cross-link involves residue Lys-155. An N6-acetyllysine; alternate modification is found at Lys-159. Residue Lys-159 forms a Glycyl lysine isopeptide (Lys-Gly) (interchain with G-Cter in SUMO2); alternate linkage. Ser-354 carries the phosphoserine modification.

This sequence belongs to the WD repeat RBAP46/RBAP48/MSI1 family. As to quaternary structure, binds directly to helix 1 of the histone fold of histone H4, a region that is not accessible when H4 is in chromatin. Subunit of the type B histone acetyltransferase (HAT) complex, composed of RBBP7 and HAT1. Subunit of the core histone deacetylase (HDAC) complex, which is composed of HDAC1, HDAC2, RBBP4 and RBBP7. The core HDAC complex associates with SIN3A, ARID4B/SAP180, SAP18, SAP30, SAP130, SUDS3/SAP45 and possibly ARID4A/RBP1 and ING1 to form the SIN3 HDAC complex. Component of the nucleosome remodeling and deacetylase (NuRD) repressor complex, composed of core proteins MTA1, MTA2, MTA3, RBBP4, RBBP7, HDAC1, HDAC2, MBD2, MBD3, and peripherally associated proteins CDK2AP1, CDK2AP2, GATAD2A, GATAD2B, CHD3, CHD4 and CHD5. The exact stoichiometry of the NuRD complex is unknown, and some subunits such as MBD2 and MBD3, GATAD2A and GATAD2B, and CHD3, CHD4 and CHD5 define mutually exclusive NuRD complexes. The NuRD complex may interact with MBD3L1. The NuRD complex may interact with MBD3L2. Subunit of the PRC2/EED-EZH2 complex, which is composed of at least EED, EZH2, RBBP4, RBBP7 and SUZ12. The PRC2/EED-EZH2 complex may also associate with HDAC1. Component of the NURF-1 ISWI chromatin remodeling complex (also called the nucleosome-remodeling factor (NURF) complex) at least composed of SMARCA1, BPTF, RBBP4 and RBBP7. Within the complex interacts with SMARCA1. Component of the BPFT-SMARCA1 complex at least composed of SMARCA1, BPFT, RBBP4 and RBBP7; the complex is catalytically inactive and does not remodel chromatin. Within the complex interacts with SMARCA1. Interacts with BRCA1. Interacts with CDK2AP1. Interacts with CENPA. Interacts with CHD3. Interacts with CHD4. Interacts with CREBBP, and this interaction may be enhanced by the binding of phosphorylated CREB1 to CREBBP. Interacts with HDAC7. Interacts with MTA1. Interacts with PWWP2B. Interacts with RB1 (via viral protein-binding domain). Interacts with SUV39H1. Higher levels in brain, thymus, lung, spleen, kidney, testis, and ovary/uterus; lower levels in heart, liver, and muscle.

The protein resides in the nucleus. In terms of biological role, core histone-binding subunit that may target chromatin remodeling factors, histone acetyltransferases and histone deacetylases to their histone substrates in a manner that is regulated by nucleosomal DNA. Component of several complexes which regulate chromatin metabolism. These include the type B histone acetyltransferase (HAT) complex, which is required for chromatin assembly following DNA replication; the core histone deacetylase (HDAC) complex, which promotes histone deacetylation and consequent transcriptional repression; the nucleosome remodeling and histone deacetylase complex (the NuRD complex), which promotes transcriptional repression by histone deacetylation and nucleosome remodeling; and the PRC2/EED-EZH2 complex, which promotes repression of homeotic genes during development; and the NURF (nucleosome remodeling factor) complex. The protein is Histone-binding protein RBBP7 (Rbbp7) of Mus musculus (Mouse).